A 51-amino-acid polypeptide reads, in one-letter code: UPF0320 protein YOL166W-A (51 aa).

The protein belongs to the UPF0320 family.

This chain is UPF0320 protein YOL166W-A, found in Saccharomyces cerevisiae (strain ATCC 204508 / S288c) (Baker's yeast).